The primary structure comprises 309 residues: HPr kinase/phosphorylase (309 aa).

Active-site residues include His-138 and Lys-159. Position 153–160 (153–160 (GASGIGKS)) interacts with ATP. Ser-160 is a binding site for Mg(2+). Asp-177 functions as the Proton acceptor; for phosphorylation activity. Proton donor; for dephosphorylation activity in the catalytic mechanism. The tract at residues 201-210 (IEIRGVGIID) is important for the catalytic mechanism of both phosphorylation and dephosphorylation. Glu-202 is a binding site for Mg(2+). Arg-243 is an active-site residue. The interval 264 to 269 (PVKTGR) is important for the catalytic mechanism of dephosphorylation.

It belongs to the HPrK/P family. As to quaternary structure, homohexamer. Requires Mg(2+) as cofactor.

It catalyses the reaction [HPr protein]-L-serine + ATP = [HPr protein]-O-phospho-L-serine + ADP + H(+). The enzyme catalyses [HPr protein]-O-phospho-L-serine + phosphate + H(+) = [HPr protein]-L-serine + diphosphate. In terms of biological role, catalyzes the ATP- as well as the pyrophosphate-dependent phosphorylation of a specific serine residue in HPr, a phosphocarrier protein of the phosphoenolpyruvate-dependent sugar phosphotransferase system (PTS). HprK/P also catalyzes the pyrophosphate-producing, inorganic phosphate-dependent dephosphorylation (phosphorolysis) of seryl-phosphorylated HPr (P-Ser-HPr). The two antagonistic activities of HprK/P are regulated by several intracellular metabolites, which change their concentration in response to the absence or presence of rapidly metabolisable carbon sources (glucose, fructose, etc.) in the growth medium. Therefore, by controlling the phosphorylation state of HPr, HPrK/P is a sensor enzyme that plays a major role in the regulation of carbon metabolism and sugar transport: it mediates carbon catabolite repression (CCR), and regulates PTS-catalyzed carbohydrate uptake and inducer exclusion. In Lactococcus lactis subsp. lactis (strain IL1403) (Streptococcus lactis), this protein is HPr kinase/phosphorylase.